We begin with the raw amino-acid sequence, 302 residues long: Homoserine kinase (302 aa).

Residue 90–100 (KPGSGLGSSSA) participates in ATP binding.

This sequence belongs to the GHMP kinase family. Homoserine kinase subfamily.

It is found in the cytoplasm. It catalyses the reaction L-homoserine + ATP = O-phospho-L-homoserine + ADP + H(+). It participates in amino-acid biosynthesis; L-threonine biosynthesis; L-threonine from L-aspartate: step 4/5. Functionally, catalyzes the ATP-dependent phosphorylation of L-homoserine to L-homoserine phosphate. This Methanococcus vannielii (strain ATCC 35089 / DSM 1224 / JCM 13029 / OCM 148 / SB) protein is Homoserine kinase.